The sequence spans 294 residues: Flagellin B1 (294 aa).

Residues 1 to 8 (MKTRTRKG) constitute a propeptide that is removed on maturation.

Belongs to the archaeal flagellin family.

The protein resides in the archaeal flagellum. In terms of biological role, flagellin is the subunit protein which polymerizes to form the filaments of archaeal flagella. This chain is Flagellin B1 (flaB1), found in Thermococcus kodakarensis (strain ATCC BAA-918 / JCM 12380 / KOD1) (Pyrococcus kodakaraensis (strain KOD1)).